We begin with the raw amino-acid sequence, 358 residues long: Dual-specificity RNA methyltransferase RlmN (358 aa).

E91 serves as the catalytic Proton acceptor. One can recognise a Radical SAM core domain in the interval 102-337; the sequence is GNIRITQCLS…TILRKSKGQD (236 aa). C109 and C342 form a disulfide bridge. [4Fe-4S] cluster-binding residues include C116, C120, and C123. S-adenosyl-L-methionine-binding positions include 169–170, S201, 223–225, and N299; these read GE and SLH. Residue C342 is the S-methylcysteine intermediate of the active site.

This sequence belongs to the radical SAM superfamily. RlmN family. [4Fe-4S] cluster serves as cofactor.

The protein localises to the cytoplasm. The enzyme catalyses adenosine(2503) in 23S rRNA + 2 reduced [2Fe-2S]-[ferredoxin] + 2 S-adenosyl-L-methionine = 2-methyladenosine(2503) in 23S rRNA + 5'-deoxyadenosine + L-methionine + 2 oxidized [2Fe-2S]-[ferredoxin] + S-adenosyl-L-homocysteine. The catalysed reaction is adenosine(37) in tRNA + 2 reduced [2Fe-2S]-[ferredoxin] + 2 S-adenosyl-L-methionine = 2-methyladenosine(37) in tRNA + 5'-deoxyadenosine + L-methionine + 2 oxidized [2Fe-2S]-[ferredoxin] + S-adenosyl-L-homocysteine. Functionally, specifically methylates position 2 of adenine 2503 in 23S rRNA and position 2 of adenine 37 in tRNAs. m2A2503 modification seems to play a crucial role in the proofreading step occurring at the peptidyl transferase center and thus would serve to optimize ribosomal fidelity. In Lawsonia intracellularis (strain PHE/MN1-00), this protein is Dual-specificity RNA methyltransferase RlmN.